The primary structure comprises 507 residues: Proton-coupled zinc antiporter SLC30A1 (507 aa).

At 1–10 (MGCWGRNRGR) the chain is on the cytoplasmic side. Residues 11–31 (LLCMLALTFMFMVLEVVVSRV) traverse the membrane as a helical segment. Over 32-35 (TSSL) the chain is Extracellular. Residues 36–56 (AMLSDSFHMLSDVLALVVALV) traverse the membrane as a helical segment. Zn(2+) is bound by residues His-43 and Asp-47. Topologically, residues 57 to 78 (AERFARRTHATQKNTFGWIRAE) are cytoplasmic. The helical transmembrane segment at 79–99 (VMGALVNAIFLTGLCFAILLE) threads the bilayer. Over 100–113 (AIERFIEPHEMQQP) the chain is Extracellular. A helical membrane pass occupies residues 114-134 (LVVLGVGVAGLLVNVLGLCLF). At 135–248 (HHHSGFSQDS…RAGQLNMRGV (114 aa)) the chain is on the cytoplasmic side. Positions 142-217 (QDSGHGHSHG…DPENPRSGDT (76 aa)) are disordered. Residues 146–158 (HGHSHGGHGHGHG) form a 6 X 2 AA approximate repeats of H-G region. Over residues 147-167 (GHSHGGHGHGHGLPKGPRVKS) the composition is skewed to basic residues. Residues 189 to 201 (TNTLVANTSNSNG) show a composition bias toward polar residues. Residues 249–269 (FLHVLGDALGSVIVVVNALVF) form a helical membrane-spanning segment. Residues His-251 and Asp-255 each coordinate Zn(2+). At 270 to 308 (YFSWKGCSEGDFCVNPCFPDPCKAFVEIINSTHASVYEA) the chain is on the extracellular side. N-linked (GlcNAc...) asparagine glycosylation is present at Asn-299. A helical membrane pass occupies residues 309 to 329 (GPCWVLYLDPTLCVVMVCILL). Residues 330 to 507 (YTTYPLLKES…MPNKQPESSL (178 aa)) are Cytoplasmic-facing. Phosphoserine is present on Ser-506.

This sequence belongs to the cation diffusion facilitator (CDF) transporter (TC 2.A.4) family. SLC30A subfamily. As to quaternary structure, homodimer. Interacts with TMEM163. Interacts and forms a complex with TMC6 and TMC8; the interaction regulates zinc transport into the ER. (Microbial infection) Interacts with human papillomavirus 16/HPV16 protein E5; the interaction alleviates SLC30A1-mediated transcription factors inhibition. In terms of processing, N-glycosylated at Asn-299. N-glycosylation promotes endocytosis and degradation through the proteasomal or lysosomal pathways.

The protein resides in the cell membrane. Its subcellular location is the basolateral cell membrane. It localises to the cytoplasmic vesicle membrane. It is found in the cytoplasm. The protein localises to the endoplasmic reticulum membrane. The protein resides in the golgi apparatus membrane. Its subcellular location is the nucleus membrane. The enzyme catalyses Zn(2+)(in) + 2 H(+)(out) = Zn(2+)(out) + 2 H(+)(in). In terms of biological role, zinc ion:proton antiporter that could function at the plasma membrane mediating zinc efflux from cells against its electrochemical gradient protecting them from intracellular zinc accumulation and toxicity. Alternatively, could prevent the transport to the plasma membrane of CACNB2, the L-type calcium channels regulatory subunit, through a yet to be defined mechanism. By modulating the expression of these channels at the plasma membrane, could prevent calcium and zinc influx into cells. By the same mechanism, could also prevent L-type calcium channels-mediated heavy metal influx into cells. In some cells, could also function as a zinc ion:proton antiporter mediating zinc entry into the lumen of cytoplasmic vesicles. In macrophages, can increase zinc ions concentration into the lumen of cytoplasmic vesicles containing engulfed bacteria and could help inactivate them. Forms a complex with TMC6/EVER1 and TMC8/EVER2 at the ER membrane of keratynocytes which facilitates zinc uptake into the ER. Down-regulates the activity of transcription factors induced by zinc and cytokines. This is Proton-coupled zinc antiporter SLC30A1 from Homo sapiens (Human).